A 209-amino-acid polypeptide reads, in one-letter code: Ribosomal RNA small subunit methyltransferase G (209 aa).

Residues glycine 71, phenylalanine 76, 122 to 123, and arginine 135 each bind S-adenosyl-L-methionine; that span reads AE.

Belongs to the methyltransferase superfamily. RNA methyltransferase RsmG family.

It localises to the cytoplasm. Its function is as follows. Specifically methylates the N7 position of a guanine in 16S rRNA. This chain is Ribosomal RNA small subunit methyltransferase G, found in Phocaeicola vulgatus (strain ATCC 8482 / DSM 1447 / JCM 5826 / CCUG 4940 / NBRC 14291 / NCTC 11154) (Bacteroides vulgatus).